The chain runs to 414 residues: Serine hydroxymethyltransferase (414 aa).

Residues Leu116 and 120–122 (GHL) each bind (6S)-5,6,7,8-tetrahydrofolate. The residue at position 224 (Lys224) is an N6-(pyridoxal phosphate)lysine. Residues Glu240 and 348–350 (SPF) each bind (6S)-5,6,7,8-tetrahydrofolate.

This sequence belongs to the SHMT family. As to quaternary structure, homodimer. Pyridoxal 5'-phosphate is required as a cofactor.

The protein localises to the cytoplasm. It catalyses the reaction (6R)-5,10-methylene-5,6,7,8-tetrahydrofolate + glycine + H2O = (6S)-5,6,7,8-tetrahydrofolate + L-serine. Its pathway is one-carbon metabolism; tetrahydrofolate interconversion. The protein operates within amino-acid biosynthesis; glycine biosynthesis; glycine from L-serine: step 1/1. Its function is as follows. Catalyzes the reversible interconversion of serine and glycine with tetrahydrofolate (THF) serving as the one-carbon carrier. This reaction serves as the major source of one-carbon groups required for the biosynthesis of purines, thymidylate, methionine, and other important biomolecules. Also exhibits THF-independent aldolase activity toward beta-hydroxyamino acids, producing glycine and aldehydes, via a retro-aldol mechanism. The protein is Serine hydroxymethyltransferase of Campylobacter jejuni subsp. jejuni serotype O:2 (strain ATCC 700819 / NCTC 11168).